Consider the following 80-residue polypeptide: Exodeoxyribonuclease 7 small subunit (80 aa).

This sequence belongs to the XseB family. As to quaternary structure, heterooligomer composed of large and small subunits.

The protein resides in the cytoplasm. It carries out the reaction Exonucleolytic cleavage in either 5'- to 3'- or 3'- to 5'-direction to yield nucleoside 5'-phosphates.. In terms of biological role, bidirectionally degrades single-stranded DNA into large acid-insoluble oligonucleotides, which are then degraded further into small acid-soluble oligonucleotides. The sequence is that of Exodeoxyribonuclease 7 small subunit from Cronobacter sakazakii (strain ATCC BAA-894) (Enterobacter sakazakii).